The following is an 81-amino-acid chain: uncharacterized protein (81 aa).

The next 2 membrane-spanning stretches (helical) occupy residues 10–30 and 56–76; these read FFVLLFIFTILFLIVVAFLLL and VLYLFAFGILAVLFLLIAFAI.

Its subcellular location is the host membrane. This is an uncharacterized protein from Acidianus two-tailed virus (ATV).